We begin with the raw amino-acid sequence, 115 residues long: Large ribosomal subunit protein bL20 (115 aa).

This sequence belongs to the bacterial ribosomal protein bL20 family.

In terms of biological role, binds directly to 23S ribosomal RNA and is necessary for the in vitro assembly process of the 50S ribosomal subunit. It is not involved in the protein synthesizing functions of that subunit. The protein is Large ribosomal subunit protein bL20 of Chlorobium chlorochromatii (strain CaD3).